We begin with the raw amino-acid sequence, 66 residues long: Cold shock-like protein CspLA (66 aa).

In terms of domain architecture, CSD spans 4–63 (GTVKWFNAEKGFGFIERENGDDVFVHFSAIQGDGFKSLDEGQAVTFDVEEGQRGPQAANV).

As to quaternary structure, homodimer.

Its subcellular location is the cytoplasm. The polypeptide is Cold shock-like protein CspLA (cspLA) (Listeria innocua serovar 6a (strain ATCC BAA-680 / CLIP 11262)).